We begin with the raw amino-acid sequence, 148 residues long: Snaclec 2 (148 aa).

A signal peptide spans 1 to 23; it reads MGRFIFVSFGLLVVFLSLSGTEA. Cystine bridges form between cysteine 27-cysteine 38, cysteine 55-cysteine 144, and cysteine 121-cysteine 136. Residues 34–145 enclose the C-type lectin domain; it reads YDQNCYKAFE…CSGTHSFVCK (112 aa).

The protein belongs to the snaclec family. Heterodimer; disulfide-linked. In terms of tissue distribution, expressed by the venom gland.

Its subcellular location is the secreted. In terms of biological role, interferes with one step of hemostasis (modulation of platelet aggregation, or coagulation cascade, for example). This chain is Snaclec 2, found in Echis ocellatus (Ocellated saw-scaled viper).